Here is a 389-residue protein sequence, read N- to C-terminus: Allantoicase (389 aa).

It belongs to the allantoicase family.

It carries out the reaction allantoate + H2O = (S)-ureidoglycolate + urea. Its pathway is nitrogen metabolism; (S)-allantoin degradation; (S)-ureidoglycolate from allantoate (aminidohydrolase route): step 1/1. In terms of biological role, utilization of purines as secondary nitrogen sources, when primary sources are limiting. The polypeptide is Allantoicase (allc) (Xenopus tropicalis (Western clawed frog)).